A 747-amino-acid polypeptide reads, in one-letter code: Endopolyphosphatase (747 aa).

A topological domain (cytoplasmic) is located at residue methionine 1. A helical; Signal-anchor for type II membrane protein transmembrane segment spans residues 2 to 22 (LPKTLTIWASLASLAVAQSGQ). Over 23 to 747 (VVFAKNADGK…AEYLEEPDDD (725 aa)) the chain is Vacuolar. Asparagine 134, asparagine 191, and asparagine 463 each carry an N-linked (GlcNAc...) asparagine glycan. The interval 570 to 640 (AVATSSEPES…PKFPKDLQPG (71 aa)) is disordered. Over residues 577 to 586 (PESDDYDSDL) the composition is skewed to acidic residues. Residues 591 to 625 (KKGKKKGKKGKKGKKGKKGKKKKGKKGKKGKKGKR) are compositionally biased toward basic residues. Residues 626–635 (DKSMPPKFPK) show a composition bias toward basic and acidic residues. N-linked (GlcNAc...) asparagine glycosylation occurs at asparagine 659.

It belongs to the endopolyphosphatase PPN1 family. It depends on a divalent metal cation as a cofactor. Post-translationally, processing by proteases in the vacuole may be required for activation.

Its subcellular location is the vacuole membrane. It carries out the reaction [phosphate](n+1) + n H2O = (n+1) phosphate + n H(+). Its function is as follows. Catalyzes the hydrolysis of inorganic polyphosphate (polyP) chains of many hundreds of phosphate residues into shorter lengths. The protein is Endopolyphosphatase (PPN1) of Yarrowia lipolytica (strain CLIB 122 / E 150) (Yeast).